The following is a 316-amino-acid chain: MVSKKSVKRGLITGLIGISIYSLGMHPAQAAPSPHTPVSSDPSYKAETSVTYDPNIKSDQYGLYSKAFTGTGKVNETKEKAEKKSPAKAPYSIKSVIGSDDRTRVTNTTAYPYRAIVHISSSIGSCTGWMIGPKTVATAGHCIYDTSSGSFAGTATVSPGRNGTSYPYGSVKSTRYFIPSGWRSGNTNYDYGAIELSEPIGNTVGYFGYSYTTSSLVGTTVTISGYPGDKTAGTQWQHSGPIAISETYKLQYAMDTYGGQSGSPVFEQSSSRTNCSGPCSLAVHTNGVYGGSSYNRGTRITKEVFDNLTNWKNSAQ.

An N-terminal signal peptide occupies residues 1-30 (MVSKKSVKRGLITGLIGISIYSLGMHPAQA). Residues 31 to 94 (APSPHTPVSS…SPAKAPYSIK (64 aa)) constitute a propeptide that is removed on maturation. Cysteines 126 and 142 form a disulfide. Catalysis depends on charge relay system residues H141 and S261. C275 and C279 form a disulfide bridge.

It belongs to the peptidase S1B family.

It is found in the secreted. The enzyme catalyses Preferential cleavage: Glu-|-Xaa, Asp-|-Xaa.. Specific for hydrolysis of peptide bonds on the carboxyl side of acidic amino acid residues, with a strong preference for Glu. The chain is Glutamyl endopeptidase (blaSE) from Bacillus licheniformis (strain ATCC 14580 / DSM 13 / JCM 2505 / CCUG 7422 / NBRC 12200 / NCIMB 9375 / NCTC 10341 / NRRL NRS-1264 / Gibson 46).